The chain runs to 461 residues: Type IV secretion system protein PtlD homolog (461 aa).

Residues 1–24 (MAGLSRILLSCTLACLLAGQAAQA) form the signal peptide. The next 5 membrane-spanning stretches (helical) occupy residues 118–138 (LQPL…YALL), 232–252 (WLLC…LAAS), 253–273 (LLIV…LFLV), 294–314 (ALVF…VLAG), and 333–353 (MLAA…VPLA). A compositionally biased stretch (low complexity) spans 376 to 411 (AHRQAAARQYAPRPAAAAAAAGPHQAGTYAASATPA). A disordered region spans residues 376–461 (AHRQAAARQY…RVLPRKPNLP (86 aa)). The segment covering 439–453 (VRRDDRPAPAPDRRV) has biased composition (basic and acidic residues).

Its subcellular location is the cell membrane. The polypeptide is Type IV secretion system protein PtlD homolog (ptlD) (Bordetella bronchiseptica (strain ATCC BAA-588 / NCTC 13252 / RB50) (Alcaligenes bronchisepticus)).